A 556-amino-acid chain; its full sequence is 2-succinyl-5-enolpyruvyl-6-hydroxy-3-cyclohexene-1-carboxylate synthase (556 aa).

The protein belongs to the TPP enzyme family. MenD subfamily. In terms of assembly, homodimer. It depends on Mg(2+) as a cofactor. Mn(2+) is required as a cofactor. Thiamine diphosphate serves as cofactor.

It carries out the reaction isochorismate + 2-oxoglutarate + H(+) = 5-enolpyruvoyl-6-hydroxy-2-succinyl-cyclohex-3-ene-1-carboxylate + CO2. Its pathway is quinol/quinone metabolism; 1,4-dihydroxy-2-naphthoate biosynthesis; 1,4-dihydroxy-2-naphthoate from chorismate: step 2/7. It participates in quinol/quinone metabolism; menaquinone biosynthesis. Catalyzes the thiamine diphosphate-dependent decarboxylation of 2-oxoglutarate and the subsequent addition of the resulting succinic semialdehyde-thiamine pyrophosphate anion to isochorismate to yield 2-succinyl-5-enolpyruvyl-6-hydroxy-3-cyclohexene-1-carboxylate (SEPHCHC). This chain is 2-succinyl-5-enolpyruvyl-6-hydroxy-3-cyclohexene-1-carboxylate synthase, found in Escherichia coli O157:H7.